The chain runs to 534 residues: Allene oxide synthase 1, chloroplastic (534 aa).

2 disordered regions span residues 1–31 (MAST…SSYR) and 43–71 (EIPP…LPAQ). The N-terminal 69 residues, 1–69 (MASTSLSLPS…SPPVKQAKLP (69 aa)), are a transit peptide targeting the chloroplast. Low complexity-rich tracts occupy residues 17–31 (SHTS…SSYR) and 43–62 (EIPP…SSPP). Heme b is bound by residues Lys149, His180, and Lys184. Positions 337 and 343 each coordinate (13S)-hydroperoxy-(9Z,11E)-octadecadienoate. Asn337 serves as a coordination point for (13S)-hydroperoxy-(9Z,11E,15Z)-octadecatrienoate. Heme b contacts are provided by Lys485 and Cys487.

The protein belongs to the cytochrome P450 family. The cofactor is heme b. Expressed in flowers. Detected in stems and roots, but not in leaves and fruits under non-inducing conditions.

It is found in the plastid. The protein resides in the chloroplast. It carries out the reaction (13S)-hydroperoxy-(9Z,11E,15Z)-octadecatrienoate = (9Z,13S,15Z)-12,13-epoxyoctadeca-9,11,15-trienoate + H2O. The enzyme catalyses (13S)-hydroperoxy-(9Z,11E)-octadecadienoate = (9Z,13S)-12,13-epoxyoctadeca-9,11-dienoate + H2O. Cytochrome P450 of the CYP74A subfamily involved in the biosynthesis of jasmonic acid from lipoxygenase-derived hydroperoxides of free fatty acids. Catalyzes the synthesis of unstable allene oxide, which is further converted spontaneously by hydrolysis or cyclization. Can use 13S-hydroperoxy-9(Z),11(E),15(Z)-octadecatrienoic acid (13-HPOT) and 13S-hydroperoxy-9(Z),11(E)-octadecadienoic acid (13-HPOD) as substrates. In Solanum lycopersicum (Tomato), this protein is Allene oxide synthase 1, chloroplastic.